Reading from the N-terminus, the 182-residue chain is Pyruvate synthase subunit PorC (182 aa).

Heterotetramer of one alpha, one beta, one delta and one gamma chain.

The enzyme catalyses 2 oxidized [2Fe-2S]-[ferredoxin] + pyruvate + CoA = 2 reduced [2Fe-2S]-[ferredoxin] + acetyl-CoA + CO2 + H(+). The sequence is that of Pyruvate synthase subunit PorC (porC) from Methanosarcina barkeri (strain Fusaro / DSM 804).